Consider the following 365-residue polypeptide: UDP-N-acetylglucosamine--N-acetylmuramyl-(pentapeptide) pyrophosphoryl-undecaprenol N-acetylglucosamine transferase (365 aa).

Residues 19-21 (TGG), asparagine 131, arginine 170, serine 201, isoleucine 255, 274-279 (ALTVTE), and glutamine 300 contribute to the UDP-N-acetyl-alpha-D-glucosamine site.

This sequence belongs to the glycosyltransferase 28 family. MurG subfamily.

It is found in the cell inner membrane. It carries out the reaction di-trans,octa-cis-undecaprenyl diphospho-N-acetyl-alpha-D-muramoyl-L-alanyl-D-glutamyl-meso-2,6-diaminopimeloyl-D-alanyl-D-alanine + UDP-N-acetyl-alpha-D-glucosamine = di-trans,octa-cis-undecaprenyl diphospho-[N-acetyl-alpha-D-glucosaminyl-(1-&gt;4)]-N-acetyl-alpha-D-muramoyl-L-alanyl-D-glutamyl-meso-2,6-diaminopimeloyl-D-alanyl-D-alanine + UDP + H(+). Its pathway is cell wall biogenesis; peptidoglycan biosynthesis. Cell wall formation. Catalyzes the transfer of a GlcNAc subunit on undecaprenyl-pyrophosphoryl-MurNAc-pentapeptide (lipid intermediate I) to form undecaprenyl-pyrophosphoryl-MurNAc-(pentapeptide)GlcNAc (lipid intermediate II). The polypeptide is UDP-N-acetylglucosamine--N-acetylmuramyl-(pentapeptide) pyrophosphoryl-undecaprenol N-acetylglucosamine transferase (Acinetobacter baylyi (strain ATCC 33305 / BD413 / ADP1)).